Consider the following 276-residue polypeptide: NAD(+)--protein-threonine ADP-ribosyltransferase (276 aa).

As to quaternary structure, interacts directly with host ubiquitin.

The protein resides in the secreted. It localises to the host cell. The enzyme catalyses L-threonyl-[protein] + NAD(+) = O-(ADP-D-ribosyl)-L-threonyl-[protein] + nicotinamide + H(+). Its function is as follows. ADP-ribosyltransferase that specifically modifies host ubiquitin on 'Thr-66' residue, which causes the shutdown of polyubiquitin synthesis and disrupts the recognition and reversal of polyubiquitin in host cells during infection. Threonine ADP-ribosylation of ubiquitin prevents the transfer of ubiquitin from ubiquitin-activating enzyme E1 to ubiquitin-conjugating enzyme E2, which inhibits subsequent ubiquitin activation and leads to the shutdown of polyubiquitin synthesis in host cells. The modification also causes dysfunction of polyubiquitin chains in cells, thereby blocking host ubiquitin signaling. ADP-ribosylation by CteC is likely irreversible. Plays a crucial role in bacterial colonization in mice during infection. The chain is NAD(+)--protein-threonine ADP-ribosyltransferase from Chromobacterium violaceum (strain ATCC 12472 / DSM 30191 / JCM 1249 / CCUG 213 / NBRC 12614 / NCIMB 9131 / NCTC 9757 / MK).